The chain runs to 590 residues: MTLHSNSTTSPLFPNISSSWIHSPSDAGLPRGTVTHFGSYNVSRAAGNFSSPNGPTDDPLGGHTVWQVVFIAFLTGILALVTIIGNILVIVSFKVNKQLKTVNNYFLLSLACADLIIGVISMNLFTTYIIMNRWALGNLACDLWLAIDYVASNASVMNLLVISFDRYFSITRPLTYRAKRTTKRAGVMIGLAWVISFVLWAPAILFWQYFVGKRTVPPGECFIQFLSEPTITFGTAIAAFYMPVTIMTILYWRIYKETEKRTKELAGLQASGTEAETENFVHPTGSSRSCSSYELQQQSMKRANRRKYGRCHFWFTTKSWKPSSEQMDQDHSSSDSWNNNDAAASLENSASSDEEDIGSETRAIYSIVLKLPGHSTILNSTKLPSSDNLQVPEEELGMVDLERKANKLQAQKSVDDGGSFPKSFSKLPIQLESAVDTAKTADVNSSVGKTTATLPLSFKEATLAKRFALKTRSQITKRKRMSLVKEKKAAQTLSAILLAFIITWTPYNIMVLVNTFCDSCIPKTFWNLGYWLCYINSTVNPVCYALCNKTFRTTFKMLLLCQCDKKKRRKQQYQQRQSVIFHKRAPEQAL.

Residues 1–67 are Extracellular-facing; it reads MTLHSNSTTS…DPLGGHTVWQ (67 aa). 4 N-linked (GlcNAc...) asparagine glycosylation sites follow: Asn6, Asn15, Asn41, and Asn48. The helical transmembrane segment at 68-91 threads the bilayer; it reads VVFIAFLTGILALVTIIGNILVIV. Over 92 to 104 the chain is Cytoplasmic; that stretch reads SFKVNKQLKTVNN. A helical membrane pass occupies residues 105-130; sequence YFLLSLACADLIIGVISMNLFTTYII. The Extracellular portion of the chain corresponds to 131–142; the sequence is MNRWALGNLACD. Cys141 and Cys221 are joined by a disulfide. The helical transmembrane segment at 143–164 threads the bilayer; it reads LWLAIDYVASNASVMNLLVISF. The Cytoplasmic portion of the chain corresponds to 165–184; sequence DRYFSITRPLTYRAKRTTKR. A helical transmembrane segment spans residues 185–206; sequence AGVMIGLAWVISFVLWAPAILF. Over 207–229 the chain is Extracellular; sequence WQYFVGKRTVPPGECFIQFLSEP. The chain crosses the membrane as a helical span at residues 230 to 252; that stretch reads TITFGTAIAAFYMPVTIMTILYW. Residues 253–491 are Cytoplasmic-facing; it reads RIYKETEKRT…SLVKEKKAAQ (239 aa). Positions 275 to 281 match the Basolateral sorting signal motif; that stretch reads AETENFV. The segment at 323 to 357 is disordered; that stretch reads SSEQMDQDHSSSDSWNNNDAAASLENSASSDEEDI. Residues 334 to 345 show a composition bias toward low complexity; it reads SDSWNNNDAAAS. Residue Ser385 is modified to Phosphoserine. Residues 492-514 form a helical membrane-spanning segment; sequence TLSAILLAFIITWTPYNIMVLVN. Over 515-526 the chain is Extracellular; it reads TFCDSCIPKTFW. Cys517 and Cys520 form a disulfide bridge. A helical membrane pass occupies residues 527–546; that stretch reads NLGYWLCYINSTVNPVCYAL. Residues 547 to 590 are Cytoplasmic-facing; the sequence is CNKTFRTTFKMLLLCQCDKKKRRKQQYQQRQSVIFHKRAPEQAL.

Belongs to the G-protein coupled receptor 1 family. Muscarinic acetylcholine receptor subfamily. CHRM3 sub-subfamily. In terms of assembly, homodimer; the dimers can form tetramers. Interacts with NALCN. Interacts with TMEM147.

It localises to the cell membrane. The protein resides in the postsynaptic cell membrane. It is found in the basolateral cell membrane. The protein localises to the endoplasmic reticulum membrane. The muscarinic acetylcholine receptor mediates various cellular responses, including inhibition of adenylate cyclase, breakdown of phosphoinositides and modulation of potassium channels through the action of G proteins. Primary transducing effect is Pi turnover. In Pongo pygmaeus (Bornean orangutan), this protein is Muscarinic acetylcholine receptor M3 (CHRM3).